The following is a 1026-amino-acid chain: Multidrug resistance protein MdtC (1026 aa).

11 consecutive transmembrane segments (helical) span residues 15 to 35 (ILIA…LPVA), 333 to 353 (EVEE…FLFL), 360 to 380 (LIPA…MYLC), 387 to 407 (LSLM…IVVL), 431 to 451 (VGFT…PLLL), 463 to 483 (FAVT…TLTP), 528 to 548 (LVGV…IAIP), 853 to 873 (LILI…LYES), 897 to 917 (LFNA…IGIV), 953 to 973 (PIMM…LSGG), and 984 to 1004 (ITIV…TPVV).

It belongs to the resistance-nodulation-cell division (RND) (TC 2.A.6) family. MdtC subfamily. Part of a tripartite efflux system composed of MdtA, MdtB and MdtC. MdtC forms a heteromultimer with MdtB.

Its subcellular location is the cell inner membrane. This is Multidrug resistance protein MdtC from Salmonella gallinarum (strain 287/91 / NCTC 13346).